Here is a 467-residue protein sequence, read N- to C-terminus: Venom serine carboxypeptidase (467 aa).

Positions 1 to 18 are cleaved as a signal peptide; the sequence is MKKLVLLQFLFFISFARG. 2 N-linked (GlcNAc...) asparagine glycosylation sites follow: Asn-130 and Asn-169. Ser-202 is a catalytic residue. Asn-304, Asn-322, and Asn-344 each carry an N-linked (GlcNAc...) asparagine glycan. Residues Asp-387 and His-444 contribute to the active site.

It belongs to the peptidase S10 family. As to expression, expressed by the venom duct.

The protein localises to the secreted. It catalyses the reaction Release of a C-terminal amino acid with broad specificity.. The protein is Venom serine carboxypeptidase of Apis mellifera (Honeybee).